A 279-amino-acid chain; its full sequence is NAD kinase (279 aa).

Aspartate 61 acts as the Proton acceptor in catalysis. NAD(+)-binding positions include 61–62, 138–139, lysine 149, lysine 166, aspartate 168, and 179–184; these read DG, ND, and TGYSFS.

It belongs to the NAD kinase family. A divalent metal cation serves as cofactor.

It localises to the cytoplasm. It catalyses the reaction NAD(+) + ATP = ADP + NADP(+) + H(+). Its function is as follows. Involved in the regulation of the intracellular balance of NAD and NADP, and is a key enzyme in the biosynthesis of NADP. Catalyzes specifically the phosphorylation on 2'-hydroxyl of the adenosine moiety of NAD to yield NADP. The polypeptide is NAD kinase (Borrelia garinii subsp. bavariensis (strain ATCC BAA-2496 / DSM 23469 / PBi) (Borreliella bavariensis)).